The sequence spans 1939 residues: Myosin-1 (1939 aa).

A Myosin N-terminal SH3-like domain is found at 33–82; that stretch reads DAKTSVFVVDPKESFVKATVQSREGGKVTAKTEAGATVTVKDDQVFPMNP. 2 positions are modified to phosphothreonine: threonine 64 and threonine 69. Residues 86 to 782 enclose the Myosin motor domain; it reads DKIEDMAMMT…LLGLLEEMRD (697 aa). The residue at position 130 (lysine 130) is an N6,N6,N6-trimethyllysine. 179-186 is a binding site for ATP; it reads GESGAGKT. The residue at position 389 (tyrosine 389) is a Phosphotyrosine. Threonine 419 is modified (phosphothreonine). A Phosphotyrosine modification is found at tyrosine 424. Residues 659–681 are actin-binding; sequence LNKLMTNLRSTHPHFVRCIIPNE. Histidine 757 is subject to Pros-methylhistidine. Positions 761-775 are actin-binding; sequence KFGHTKVFFKAGLLG. In terms of domain architecture, IQ spans 785-814; that stretch reads LAQLITRTQAMCRGFLARVEYQKMVERRES. Residues 843–1939 adopt a coiled-coil conformation; the sequence is LLKSAETEKE…EVHTKIISEE (1097 aa). 4 positions are modified to phosphoserine: serine 1092, serine 1096, serine 1162, and serine 1237. Threonine 1241 carries the post-translational modification Phosphothreonine. Phosphoserine is present on residues serine 1243 and serine 1261. 2 positions are modified to phosphothreonine: threonine 1265 and threonine 1286. 4 positions are modified to phosphoserine: serine 1288, serine 1292, serine 1303, and serine 1306. Threonine 1467 carries the phosphothreonine modification. Serine 1474 is modified (phosphoserine). Residue tyrosine 1492 is modified to Phosphotyrosine. At serine 1495 the chain carries Phosphoserine. At threonine 1501 the chain carries Phosphothreonine. The residue at position 1514 (serine 1514) is a Phosphoserine. A Phosphothreonine modification is found at threonine 1517. A phosphoserine mark is found at serine 1542, serine 1554, serine 1574, serine 1600, serine 1603, serine 1714, and serine 1726. Phosphothreonine occurs at positions 1730 and 1736. The residue at position 1739 (serine 1739) is a Phosphoserine.

The protein belongs to the TRAFAC class myosin-kinesin ATPase superfamily. Myosin family. In terms of assembly, muscle myosin is a hexameric protein that consists of 2 heavy chain subunits (MHC), 2 alkali light chain subunits (MLC) and 2 regulatory light chain subunits (MLC-2). Interacts with SLC26A5.

It localises to the cytoplasm. The protein localises to the myofibril. In terms of biological role, required for normal hearing. It plays a role in cochlear amplification of auditory stimuli, likely through the positive regulation of prestin (SLC26A5) activity and outer hair cell (OHC) electromotility. The sequence is that of Myosin-1 from Homo sapiens (Human).